Consider the following 160-residue polypeptide: Protransforming growth factor alpha (160 aa).

A signal peptide spans methionine 1–leucine 23. A propeptide spans glutamate 24–alanine 39 (removed in mature form). The Extracellular segment spans residues glutamate 24–glutamine 98. A glycan (N-linked (GlcNAc...) asparagine) is linked at asparagine 25. An EGF-like domain is found at histidine 43–glutamate 83. Disulfide bonds link cysteine 47/cysteine 60, cysteine 55/cysteine 71, and cysteine 73/cysteine 82. A propeptide spans valine 90 to valine 160 (removed in mature form). Residues alanine 99–cysteine 124 form a helical membrane-spanning segment. The Cytoplasmic segment spans residues glutamine 125–valine 160. 2 S-palmitoyl cysteine lipidation sites follow: cysteine 153 and cysteine 154.

In terms of assembly, interacts with the PDZ domains of MAGI3, SDCBP and SNTA1. The interaction with SDCBP, is required for the targeting to the cell surface. In the endoplasmic reticulum, in its immature form (i.e. with a prosegment and lacking full N-glycosylation), interacts with CNIH. In the Golgi apparatus, may form a complex with CNIH and GORASP2. Interacts (via cytoplasmic C-terminal domain) with NKD2.

Its subcellular location is the secreted. The protein resides in the extracellular space. It is found in the cell membrane. Functionally, TGF alpha is a mitogenic polypeptide that is able to bind to the EGF receptor/EGFR and to act synergistically with TGF beta to promote anchorage-independent cell proliferation in soft agar. The sequence is that of Protransforming growth factor alpha (TGFA) from Sus scrofa (Pig).